We begin with the raw amino-acid sequence, 366 residues long: Probable methyltransferase-like protein 24 (366 aa).

A signal peptide spans 1–29 (MARERPPGRGCGVLRRCLLGAVLLFGLRL). The interval 36 to 110 (AGPGSPTRSA…GRPRRKGPRW (75 aa)) is disordered. The segment covering 44–63 (SAPPGPAWRPPGPHLPPAPG) has biased composition (pro residues). Residues 91–100 (TPEPGCCAPR) are compositionally biased toward low complexity.

The protein belongs to the methyltransferase superfamily.

It is found in the secreted. Probable methyltransferase. In Homo sapiens (Human), this protein is Probable methyltransferase-like protein 24 (METTL24).